The sequence spans 585 residues: Protein FAM151A (585 aa).

The helical transmembrane segment at 14 to 34 (WVFASITCVSAVAIAAIVLAI) threads the bilayer.

Belongs to the menorin family.

Its subcellular location is the membrane. This is Protein FAM151A (FAM151A) from Pongo abelii (Sumatran orangutan).